Consider the following 211-residue polypeptide: Histidine biosynthesis bifunctional protein HisIE (211 aa).

The interval 1-117 is phosphoribosyl-AMP cyclohydrolase; the sequence is MSTQTNTKSD…CWLDGNAHPF (117 aa). Residues 118–211 form a phosphoribosyl-ATP pyrophosphohydrolase region; it reads LNNLAELIAS…LARHQKAQRK (94 aa).

This sequence in the N-terminal section; belongs to the PRA-CH family. In the C-terminal section; belongs to the PRA-PH family.

It localises to the cytoplasm. It catalyses the reaction 1-(5-phospho-beta-D-ribosyl)-ATP + H2O = 1-(5-phospho-beta-D-ribosyl)-5'-AMP + diphosphate + H(+). The enzyme catalyses 1-(5-phospho-beta-D-ribosyl)-5'-AMP + H2O = 1-(5-phospho-beta-D-ribosyl)-5-[(5-phospho-beta-D-ribosylamino)methylideneamino]imidazole-4-carboxamide. Its pathway is amino-acid biosynthesis; L-histidine biosynthesis; L-histidine from 5-phospho-alpha-D-ribose 1-diphosphate: step 2/9. The protein operates within amino-acid biosynthesis; L-histidine biosynthesis; L-histidine from 5-phospho-alpha-D-ribose 1-diphosphate: step 3/9. This Shewanella oneidensis (strain ATCC 700550 / JCM 31522 / CIP 106686 / LMG 19005 / NCIMB 14063 / MR-1) protein is Histidine biosynthesis bifunctional protein HisIE.